A 292-amino-acid polypeptide reads, in one-letter code: Protein LRATD1 (292 aa).

Position 38 is a phosphoserine (serine 38). The 96-residue stretch at 133 to 228 (PATEQPAPAP…CRFGKREFKA (96 aa)) folds into the LRAT domain.

It belongs to the LRATD family.

It localises to the cytoplasm. May play a role in cell morphology and motility. This chain is Protein LRATD1, found in Mus musculus (Mouse).